The following is a 290-amino-acid chain: 33 kDa chaperonin (290 aa).

Cystine bridges form between cysteine 231–cysteine 233 and cysteine 263–cysteine 266.

It belongs to the HSP33 family. In terms of processing, under oxidizing conditions two disulfide bonds are formed involving the reactive cysteines. Under reducing conditions zinc is bound to the reactive cysteines and the protein is inactive.

It localises to the cytoplasm. Redox regulated molecular chaperone. Protects both thermally unfolding and oxidatively damaged proteins from irreversible aggregation. Plays an important role in the bacterial defense system toward oxidative stress. The chain is 33 kDa chaperonin from Thermotoga petrophila (strain ATCC BAA-488 / DSM 13995 / JCM 10881 / RKU-1).